The primary structure comprises 275 residues: Cytochrome c oxidase subunit 3 (275 aa).

A run of 7 helical transmembrane segments spans residues 22-42 (PWPL…VMYF), 52-72 (SGAL…ALWF), 96-116 (GVAL…WAFF), 132-152 (PVGI…ILLL), 173-193 (AILG…CQGI), 211-231 (FFFS…FIAV), and 253-273 (ILYW…VYWW).

Belongs to the cytochrome c oxidase subunit 3 family. As to quaternary structure, component of the cytochrome c oxidase (complex IV, CIV), a multisubunit enzyme composed of a catalytic core of 3 subunits and several supernumerary subunits. The complex exists as a monomer or a dimer and forms supercomplexes (SCs) in the inner mitochondrial membrane with ubiquinol-cytochrome c oxidoreductase (cytochrome b-c1 complex, complex III, CIII).

The protein localises to the mitochondrion inner membrane. It catalyses the reaction 4 Fe(II)-[cytochrome c] + O2 + 8 H(+)(in) = 4 Fe(III)-[cytochrome c] + 2 H2O + 4 H(+)(out). Its function is as follows. Component of the cytochrome c oxidase, the last enzyme in the mitochondrial electron transport chain which drives oxidative phosphorylation. The respiratory chain contains 3 multisubunit complexes succinate dehydrogenase (complex II, CII), ubiquinol-cytochrome c oxidoreductase (cytochrome b-c1 complex, complex III, CIII) and cytochrome c oxidase (complex IV, CIV), that cooperate to transfer electrons derived from NADH and succinate to molecular oxygen, creating an electrochemical gradient over the inner membrane that drives transmembrane transport and the ATP synthase. Cytochrome c oxidase is the component of the respiratory chain that catalyzes the reduction of oxygen to water. Electrons originating from reduced cytochrome c in the intermembrane space (IMS) are transferred via the dinuclear copper A center (CU(A)) of subunit 2 and heme A of subunit 1 to the active site in subunit 1, a binuclear center (BNC) formed by heme A3 and copper B (CU(B)). The BNC reduces molecular oxygen to 2 water molecules using 4 electrons from cytochrome c in the IMS and 4 protons from the mitochondrial matrix. This is Cytochrome c oxidase subunit 3 (COX3) from Mycosarcoma maydis (Corn smut fungus).